The chain runs to 103 residues: Vesicle-associated membrane protein 3 (103 aa).

The segment at 1–25 is disordered; the sequence is MSTGVPSGSSAATGSNRRLQQTQNQ. Residues 1–81 lie on the Cytoplasmic side of the membrane; sequence MSTGVPSGSS…KRKYWWKNCK (81 aa). The 61-residue stretch at 18-78 folds into the v-SNARE coiled-coil homology domain; that stretch reads RLQQTQNQVD…AKLKRKYWWK (61 aa). Glycyl lysine isopeptide (Lys-Gly) (interchain with G-Cter in ubiquitin) cross-links involve residues K70, K72, and K81. Residues 82–102 traverse the membrane as a helical; Anchor for type IV membrane protein segment; it reads MWAIGISVLVIIVIIIIVWCV. S103 is a topological domain (vesicular).

The protein belongs to the synaptobrevin family. Interacts with POPDC1 (via the C-terminus cytoplasmic tail). Interacts with BCAP31; involved in VAMP3 export from the endoplasmic reticulum. Interacts with BAIAP3; this interaction is increased in the presence of calcium. Interacts with PICALM. In terms of processing, ubiquitinated by RNF167 at Lys-70, Lys-72 and Lys-81, regulating the recycling endosome pathway. (Microbial infection) Targeted and hydrolyzed by C.botulinum neurotoxin type D (BoNT/D, botD) which hydrolyzes the 46-Lys-|-Leu-47 bond and probably inhibits neurotransmitter release. Post-translationally, (Microbial infection) Targeted and hydrolyzed by C.botulinum neurotoxin type F (BoNT/F, botF) which hydrolyzes the 45-Gln-|-Lys-46 bond and probably inhibits neurotransmitter release. In terms of processing, (Microbial infection) Targeted and hydrolyzed by C.tetani toxin (tetX) which hydrolyzes the 63-Gln-|-Phe-64 bond and probably inhibits neurotransmitter release. As to expression, ubiquitous.

Its subcellular location is the early endosome membrane. The protein localises to the recycling endosome membrane. It is found in the synapse. The protein resides in the synaptosome. In terms of biological role, SNARE involved in vesicular transport from the late endosomes to the trans-Golgi network. This chain is Vesicle-associated membrane protein 3 (Vamp3), found in Rattus norvegicus (Rat).